The sequence spans 434 residues: MEDIGKAGFFSDKSIGTGENTPLLDSYTFDFDSGPYGGAHYTITGVPDMSTGFSTFAGTGLSATEMGYCYPFGVDPSSRGDGSIHPPKCRYEKSIMQVHPESGDLGMQGATLFPSSPTSLESVRKRALDLHCFLFTQLHCVTDEDLAEAILSPFIFSESVKEPTGPRANIIQRLIYASECLLGLISTLSFLWTGCEDSGNSPPASMANQQGPQFQFPSRTQHKSNSVLAQHLLGLAGRSLHLEDSANFTGRQHTASPSETSVVDLPTITTILTCHVGILSVYRYTFSRIHDALRACGSSPSGTPESELTSPHKRATTCSPLPNKDTLPLNMPFVLGLRVQLEIMTHMLDRMRAAWATAMEDHPGHEDHQQQQEEVKQHDRLSHHKRATLATLKSMLALNGHELSNQDGGTGIGAVGDLGDRVRRLLRNCDKGMY.

Disordered regions lie at residues 297–321 (GSSPSGTPESELTSPHKRATTCSPL) and 362–383 (HPGHEDHQQQQEEVKQHDRLSH). Residues 298–309 (SSPSGTPESELT) are compositionally biased toward polar residues. Over residues 362–380 (HPGHEDHQQQQEEVKQHDR) the composition is skewed to basic and acidic residues.

The protein localises to the nucleus. Transcription factor probably involved in regulation of gene cluster that mediates the biosynthesis of a tyrosine-derived cytochalasan acting as a fungal signal recognized by resistant rice plants and leads to avirulence in Pi33 resistant rice cultivars. This is Pyrichalasin H cluster regulator BC2 from Pyricularia oryzae (strain 70-15 / ATCC MYA-4617 / FGSC 8958) (Rice blast fungus).